Consider the following 611-residue polypeptide: Growth hormone receptor (611 aa).

An N-terminal signal peptide occupies residues 1 to 20 (MDLRHLLLTLVLVCANDSLS). Asn16 carries an N-linked (GlcNAc...) asparagine glycan. At 21–240 (ASDDVLRLPQ…EFVHCAEEIE (220 aa)) the chain is on the extracellular side. A disulfide bridge links Cys34 with Cys44. The N-linked (GlcNAc...) asparagine glycan is linked to Asn53. An intrachain disulfide couples Cys75 to Cys86. A glycan (N-linked (GlcNAc...) asparagine) is linked at Asn89. An intrachain disulfide couples Cys100 to Cys114. The Fibronectin type-III domain maps to 125–228 (PPVHLNWTLL…EILYVSFSQA (104 aa)). N-linked (GlcNAc...) asparagine glycans are attached at residues Asn130, Asn135, and Asn174. Residues 214-218 (FGEFS) carry the WSXWS motif motif. Residues 241-264 (FPWFLVVIFGACGLAVTVILILLS) form a helical membrane-spanning segment. Residues 265–611 (KQSRLKMLIF…STDQLNKIMP (347 aa)) lie on the Cytoplasmic side of the membrane. Residues 270 to 355 (KMLIFPPVPV…HLKSHSCLGA (86 aa)) form a required for JAK2 binding region. Residues 273-281 (IFPPVPVPK) carry the Box 1 motif motif. The UbE motif motif lies at 316 to 325 (DLWVEFIELD). Positions 411–455 (SLPSLANTDTQQPRMSTRPENSQPWPPFADSIDAASPSAHNQLSN) are disordered. Polar residues predominate over residues 414-433 (SLANTDTQQPRMSTRPENSQ).

It belongs to the type I cytokine receptor family. Type 1 subfamily. Post-translationally, the soluble form (GHBP) is produced by phorbol ester-promoted proteolytic cleavage at the cell surface (shedding) by ADAM17/TACE.

Its subcellular location is the cell membrane. It localises to the secreted. Receptor for pituitary gland growth hormone (GH1) involved in regulating postnatal body growth. On ligand binding, couples to the JAK2/STAT5 pathway. In terms of biological role, the soluble form (GHBP) acts as a reservoir of growth hormone in plasma and may be a modulator/inhibitor of GH signaling. The polypeptide is Growth hormone receptor (GHR) (Columba livia (Rock dove)).